Consider the following 280-residue polypeptide: Proteasome subunit beta (280 aa).

The propeptide at 1-53 (MSEYSAGRSGFSPAYLDRVGSSFTDFLAAAAPHLLPGSRPVPQIPVGNVTPHG) is removed in mature form; by autocatalysis. Thr-54 serves as the catalytic Nucleophile.

Belongs to the peptidase T1B family. As to quaternary structure, the 20S proteasome core is composed of 14 alpha and 14 beta subunits that assemble into four stacked heptameric rings, resulting in a barrel-shaped structure. The two inner rings, each composed of seven catalytic beta subunits, are sandwiched by two outer rings, each composed of seven alpha subunits. The catalytic chamber with the active sites is on the inside of the barrel. Has a gated structure, the ends of the cylinder being occluded by the N-termini of the alpha-subunits. Is capped by the proteasome-associated ATPase, ARC.

It is found in the cytoplasm. The catalysed reaction is Cleavage of peptide bonds with very broad specificity.. It participates in protein degradation; proteasomal Pup-dependent pathway. The formation of the proteasomal ATPase ARC-20S proteasome complex, likely via the docking of the C-termini of ARC into the intersubunit pockets in the alpha-rings, may trigger opening of the gate for substrate entry. Interconversion between the open-gate and close-gate conformations leads to a dynamic regulation of the 20S proteasome proteolysis activity. In terms of biological role, component of the proteasome core, a large protease complex with broad specificity involved in protein degradation. This chain is Proteasome subunit beta, found in Geodermatophilus obscurus (strain ATCC 25078 / DSM 43160 / JCM 3152 / CCUG 61914 / KCC A-0152 / KCTC 9177 / NBRC 13315 / NRRL B-3577 / G-20).